The sequence spans 443 residues: Threonine/serine transporter TdcC (443 aa).

A run of 11 helical transmembrane segments spans residues 22–42, 44–64, 97–117, 140–160, 163–183, 207–227, 261–281, 312–332, 366–386, 389–409, and 423–443; these read TTWTLGLFGTAIGAGVLFFPI, AGFGGLIPILLMLVLAYPIAF, GVVITFLYFFAICPLLWIYGV, FVALFLLLLMAFVIWFGKDLM, VMSYLVWPFIASLVLISLSLI, ILITVWLGISIMVFSFNFSPI, MLMVAVVMFFAFSCLFTLSPA, AITLEYAASIIALVAIFKSFF, ISMIFIMGSTWVVAYANPNIL, IEAMGAPIIASLLCLLPMYAI, and DNVFVTVIGLLTILNIVYKLF.

This sequence belongs to the amino acid/polyamine transporter 2 family. SdaC/TdcC subfamily.

The protein resides in the cell inner membrane. The catalysed reaction is L-threonine(in) + H(+)(in) = L-threonine(out) + H(+)(out). The enzyme catalyses L-serine(in) + H(+)(in) = L-serine(out) + H(+)(out). Its function is as follows. Involved in the import of threonine and serine into the cell, with the concomitant import of a proton (symport system). This is Threonine/serine transporter TdcC from Escherichia coli O45:K1 (strain S88 / ExPEC).